A 442-amino-acid chain; its full sequence is Probable D-serine dehydratase (442 aa).

N6-(pyridoxal phosphate)lysine is present on Lys-111.

The protein belongs to the serine/threonine dehydratase family. DsdA subfamily. Pyridoxal 5'-phosphate serves as cofactor.

The catalysed reaction is D-serine = pyruvate + NH4(+). The polypeptide is Probable D-serine dehydratase (Sinorhizobium medicae (strain WSM419) (Ensifer medicae)).